We begin with the raw amino-acid sequence, 287 residues long: Large ribosomal subunit protein uL2 (287 aa).

The interval 221 to 287 (RGSVMNPCDH…SKRSRGGRDS (67 aa)) is disordered. Residues 258–287 (KTRKRNKPSNRFVLRKRRRTSKRSRGGRDS) show a composition bias toward basic residues.

The protein belongs to the universal ribosomal protein uL2 family. As to quaternary structure, part of the 50S ribosomal subunit. Forms a bridge to the 30S subunit in the 70S ribosome.

Its function is as follows. One of the primary rRNA binding proteins. Required for association of the 30S and 50S subunits to form the 70S ribosome, for tRNA binding and peptide bond formation. It has been suggested to have peptidyltransferase activity; this is somewhat controversial. Makes several contacts with the 16S rRNA in the 70S ribosome. The chain is Large ribosomal subunit protein uL2 from Prochlorococcus marinus (strain MIT 9313).